Here is a 330-residue protein sequence, read N- to C-terminus: MGTFTLHQGQSNLIKSFFRNYYLNAELGLPNDMELREFALQPFGSDTYIRHLSFSSSEELRDYLVNRNLPLHLFYSSARYQLPAARDMEEKAWMGSDLLFDIDADHICKLRSIRFCPVCGNAITSEKCERDNVETLEYVEMTSECIKRGLEEARNLVEILEDDFGLKPKVYFSGNRGFHVQVDCYGDCALLDSDERKEIAEYVMGVGVPSYPGGGENAPGWVGRKNRGINGVTIDGQVTIDVKRLIRIPNSLHGKSGLIVKEVTNLDDFEFNEALSPFTGYTIFLPYISIETEVLSRNIKLNRGVPIKIESSIGIYLHLKNLGEVKAYVR.

Residues aspartate 101 and aspartate 103 contribute to the active site. 4 residues coordinate Zn(2+): cysteine 116, cysteine 119, cysteine 128, and aspartate 131. The active site involves aspartate 235.

It belongs to the eukaryotic-type primase small subunit family. In terms of assembly, heterodimer of a small subunit (PriS) and a large subunit (PriL). It depends on Mg(2+) as a cofactor. Requires Mn(2+) as cofactor.

Functionally, catalytic subunit of DNA primase, an RNA polymerase that catalyzes the synthesis of short RNA molecules used as primers for DNA polymerase during DNA replication. The small subunit contains the primase catalytic core and has DNA synthesis activity on its own. Binding to the large subunit stabilizes and modulates the activity, increasing the rate of DNA synthesis while decreasing the length of the DNA fragments, and conferring RNA synthesis capability. The DNA polymerase activity may enable DNA primase to also catalyze primer extension after primer synthesis. May also play a role in DNA repair. This Saccharolobus islandicus (strain M.16.27) (Sulfolobus islandicus) protein is DNA primase small subunit PriS.